The sequence spans 320 residues: ATP synthase gamma chain (320 aa).

It belongs to the ATPase gamma chain family. As to quaternary structure, F-type ATPases have 2 components, CF(1) - the catalytic core - and CF(0) - the membrane proton channel. CF(1) has five subunits: alpha(3), beta(3), gamma(1), delta(1), epsilon(1). CF(0) has three main subunits: a, b and c.

The protein resides in the cell membrane. Produces ATP from ADP in the presence of a proton gradient across the membrane. The gamma chain is believed to be important in regulating ATPase activity and the flow of protons through the CF(0) complex. This chain is ATP synthase gamma chain, found in Lactobacillus delbrueckii subsp. bulgaricus (strain ATCC 11842 / DSM 20081 / BCRC 10696 / JCM 1002 / NBRC 13953 / NCIMB 11778 / NCTC 12712 / WDCM 00102 / Lb 14).